Here is a 67-residue protein sequence, read N- to C-terminus: Protein SlyX homolog (67 aa).

This sequence belongs to the SlyX family.

The polypeptide is Protein SlyX homolog (Mesorhizobium japonicum (strain LMG 29417 / CECT 9101 / MAFF 303099) (Mesorhizobium loti (strain MAFF 303099))).